Here is a 466-residue protein sequence, read N- to C-terminus: Cytochrome c-552 (466 aa).

The first 27 residues, 1–27, serve as a signal peptide directing secretion; that stretch reads MVRNLTKKSFALSALVAASLMASGVMA. H87 lines the heme c pocket. Residues C115, C118, and K119 each coordinate heme. The heme c site is built by C153, C156, H157, C195, C198, and H199. Residues E201, Y202, K250, and Q252 each contribute to the Ca(2+) site. A substrate-binding site is contributed by Y202. H253 is a binding site for substrate. Residues H264, C271, C274, H275, H290, C303, C306, H307, and H382 each contribute to the heme c site.

This sequence belongs to the cytochrome c-552 family. Ca(2+) serves as cofactor. The cofactor is heme c.

The protein resides in the periplasm. The catalysed reaction is 6 Fe(III)-[cytochrome c] + NH4(+) + 2 H2O = 6 Fe(II)-[cytochrome c] + nitrite + 8 H(+). It functions in the pathway nitrogen metabolism; nitrate reduction (assimilation). Catalyzes the reduction of nitrite to ammonia, consuming six electrons in the process. The chain is Cytochrome c-552 from Shewanella sediminis (strain HAW-EB3).